Reading from the N-terminus, the 608-residue chain is Signal transduction histidine-protein kinase AtoS (608 aa).

Topologically, residues 1 to 15 (MHYMKWIYPRRLRNQ) are cytoplasmic. The helical transmembrane segment at 16-36 (MILMAILMVIVPTLTIGYIVE) threads the bilayer. The Periplasmic segment spans residues 37–189 (TEGRSAVLSE…DIRRQAWKMD (153 aa)). The chain crosses the membrane as a helical span at residues 190 to 210 (VRIIIVLTAGLLISLLLIVLF). Residues 211-608 (SRRLSANIDI…PINPQGNQTV (398 aa)) are Cytoplasmic-facing. The region spanning 212-262 (RRLSANIDIITDGLSTLAQNIPTRLPQLPGEMGQISQSVNNLAQALRETRT) is the HAMP domain. Positions 260–305 (TRTLNDLIIENAADGVIAIDRQGDVTTMNPAAEVITGYQRHELVGQ) constitute a PAS domain. In terms of domain architecture, PAC spans 326–382 (HGTEHVALEISFPGRDRTIELSVTTSRIHNTHGEMIGALVIFSDLTARKETQRRMAQ). One can recognise a Histidine kinase domain in the interval 395 to 602 (GVAHEVRNPL…TFTLILPINP (208 aa)). Histidine 398 carries the phosphohistidine; by autocatalysis modification.

Homodimer. Autophosphorylated. Each AtoS molecule may phosphorylate its partner within the dimer rather than phosphorylating itself.

It is found in the cell inner membrane. The enzyme catalyses ATP + protein L-histidine = ADP + protein N-phospho-L-histidine.. Its function is as follows. Member of the two-component regulatory system AtoS/AtoC. In the presence of acetoacetate, AtoS/AtoC stimulates the expression of the atoDAEB operon, leading to short chain fatty acid catabolism and activation of the poly-(R)-3-hydroxybutyrate (cPHB) biosynthetic pathway. Also induces the operon in response to spermidine. Involved in the regulation of motility and chemotaxis, via transcriptional induction of the flagellar regulon. AtoS is a membrane-associated kinase that phosphorylates and activates AtoC in response to environmental signals. In Escherichia coli (strain K12), this protein is Signal transduction histidine-protein kinase AtoS (atoS).